Consider the following 358-residue polypeptide: Popeye domain-containing protein 1 (358 aa).

Topologically, residues 1–48 (MNSTESIPLAQSTVAGFTSELESLTPVPSNETTCENWREIHHLVFHVA) are extracellular. Asn-2 and Asn-30 each carry an N-linked (GlcNAc...) asparagine glycan. The helical transmembrane segment at 49 to 69 (NVCFAVGLLIPTTLHLHMILL) threads the bilayer. Arg-70 is a topological domain (cytoplasmic). Residues 71-91 (VMLSLGCTLYVVWATLYRCAL) form a helical membrane-spanning segment. Residue Asp-92 is a topological domain, extracellular. The helical transmembrane segment at 93-113 (VMIWNSVFLGINILHLSYLLY) threads the bilayer. The required for interaction with CAV3 stretch occupies residues 93 to 115 (VMIWNSVFLGINILHLSYLLYKK). Topologically, residues 114 to 358 (KKRPVKIEKE…PDALKVHQLP (245 aa)) are cytoplasmic. Positions 136 to 186 (RVPPDLFRRLTGQFCMIQTLKRGQVYATEDKTSVDDRLSILLKGRMKVSYR) are required for interaction with KCNK2. Phosphoserine is present on residues Ser-295 and Ser-318. Residues 313–323 (SSSTASLPMSS) are compositionally biased toward low complexity. Residues 313 to 350 (SSSTASLPMSSPQQRASAKMKPIEEGVEDDDEVFVSPD) form a disordered region.

It belongs to the popeye family. As to quaternary structure, homodimer. Homodimerization requires the C-terminus cytoplasmic region. Interacts (via the C-terminus cytoplasmic tail) with TJP1. Interacts (via the C-terminus cytoplasmic tail) with ARHGEF25/GEFT (via the DH domain). Interacts (via the C-terminus cytoplasmic tail) with VAMP3. Interacts with KCNK2; the interaction enhances KCNK2 surface expression and is inhibited by cAMP. Interacts with CAV3. Expressed in epithelial cells, skeletal muscle, heart and intestinal smooth muscle (at protein level). Expressed in fetal and adult heart and skeletal muscle.

It localises to the lateral cell membrane. Its subcellular location is the cell junction. The protein resides in the tight junction. The protein localises to the membrane. It is found in the cell membrane. It localises to the sarcolemma. Its subcellular location is the caveola. Cell adhesion molecule involved in the establishment and/or maintenance of cell integrity. Involved in the formation and regulation of the tight junction (TJ) paracellular permeability barrier in epithelial cells. Plays a role in VAMP3-mediated vesicular transport and recycling of different receptor molecules through its interaction with VAMP3. Plays a role in the regulation of cell shape and movement by modulating the Rho-family GTPase activity through its interaction with ARHGEF25/GEFT. Induces primordial adhesive contact and aggregation of epithelial cells in a Ca(2+)-independent manner. Also involved in striated muscle regeneration and repair and in the regulation of cell spreading. Important for the maintenance of cardiac function. Plays a regulatory function in heart rate dynamics mediated, at least in part, through cAMP-binding and, probably, by increasing cell surface expression of the potassium channel KCNK2 and enhancing current density. Is a caveolae-associated protein important for the preservation of caveolae structural and functional integrity as well as for heart protection against ischemia injury. In Mus musculus (Mouse), this protein is Popeye domain-containing protein 1.